Consider the following 853-residue polypeptide: DNA mismatch repair protein MutS (853 aa).

614 to 621 lines the ATP pocket; sequence GPNMGGKS.

The protein belongs to the DNA mismatch repair MutS family.

Its function is as follows. This protein is involved in the repair of mismatches in DNA. It is possible that it carries out the mismatch recognition step. This protein has a weak ATPase activity. The sequence is that of DNA mismatch repair protein MutS from Escherichia coli (strain K12 / MC4100 / BW2952).